The chain runs to 228 residues: Lipoprotein-releasing system ATP-binding protein LolD (228 aa).

An ABC transporter domain is found at 5–228; sequence LRCHQVCKTY…DGLLTDITGA (224 aa). 41 to 48 is an ATP binding site; sequence GSSGSGKS.

This sequence belongs to the ABC transporter superfamily. Lipoprotein translocase (TC 3.A.1.125) family. In terms of assembly, the complex is composed of two ATP-binding proteins (LolD) and two transmembrane proteins (LolC and LolE).

The protein resides in the cell inner membrane. Its function is as follows. Part of the ABC transporter complex LolCDE involved in the translocation of mature outer membrane-directed lipoproteins, from the inner membrane to the periplasmic chaperone, LolA. Responsible for the formation of the LolA-lipoprotein complex in an ATP-dependent manner. In Vibrio cholerae serotype O1 (strain ATCC 39315 / El Tor Inaba N16961), this protein is Lipoprotein-releasing system ATP-binding protein LolD.